We begin with the raw amino-acid sequence, 161 residues long: EP300-interacting inhibitor of differentiation 2B (161 aa).

Disordered regions lie at residues 1–26 (MAEPTGLLEMSELPGDSSVPQVGTAS) and 54–77 (ARSMARMPGPVPGPIPSSVPGLAS).

Homodimer and heterodimer with EID2. Interacts with HDAC1 and HDAC2.

Its subcellular location is the nucleus. In terms of biological role, acts as a repressor of MYOD-dependent transcription, glucocorticoid receptor-dependent transcription, and muscle differentiation. The sequence is that of EP300-interacting inhibitor of differentiation 2B from Homo sapiens (Human).